The following is a 598-amino-acid chain: Probable translation initiation factor IF-2 (598 aa).

The tr-type G domain occupies 3-225; that stretch reads LRCPIVSVLG…GLAQKFLEQK (223 aa). The interval 12–19 is G1; the sequence is GHVDHGKT. 12-19 serves as a coordination point for GTP; sequence GHVDHGKT. Residues 37 to 41 form a G2 region; that stretch reads GITQH. Residues 76–79 form a G3 region; sequence DTPG. GTP contacts are provided by residues 76 to 80 and 130 to 133; these read DTPGH and NKLD. A G4 region spans residues 130–133; sequence NKLD. A G5 region spans residues 200-202; the sequence is SAM.

It belongs to the TRAFAC class translation factor GTPase superfamily. Classic translation factor GTPase family. IF-2 subfamily.

In terms of biological role, function in general translation initiation by promoting the binding of the formylmethionine-tRNA to ribosomes. Seems to function along with eIF-2. The polypeptide is Probable translation initiation factor IF-2 (Methanococcus maripaludis (strain C6 / ATCC BAA-1332)).